Reading from the N-terminus, the 197-residue chain is Phosphoheptose isomerase (197 aa).

Positions 36-197 (MVNALLNEGK…IDSQLFGSEE (162 aa)) constitute an SIS domain. 51-53 (NGG) lines the substrate pocket. His60 and Glu64 together coordinate Zn(2+). Residues Glu64, 93–94 (ND), 119–121 (STS), Ser124, and Gln174 each bind substrate. Zn(2+)-binding residues include Gln174 and His182.

This sequence belongs to the SIS family. GmhA subfamily. As to quaternary structure, homotetramer. Requires Zn(2+) as cofactor.

The protein localises to the cytoplasm. It carries out the reaction 2 D-sedoheptulose 7-phosphate = D-glycero-alpha-D-manno-heptose 7-phosphate + D-glycero-beta-D-manno-heptose 7-phosphate. It functions in the pathway carbohydrate biosynthesis; D-glycero-D-manno-heptose 7-phosphate biosynthesis; D-glycero-alpha-D-manno-heptose 7-phosphate and D-glycero-beta-D-manno-heptose 7-phosphate from sedoheptulose 7-phosphate: step 1/1. Catalyzes the isomerization of sedoheptulose 7-phosphate in D-glycero-D-manno-heptose 7-phosphate. The sequence is that of Phosphoheptose isomerase from Pseudomonas fluorescens (strain Pf0-1).